We begin with the raw amino-acid sequence, 417 residues long: MIDNILFDLIEREAKRERENIELIASENFVSSDVRQAVGSVLTNKYAEGYPSKRYYGGCSVVDDIENLAISRAMELFGASYANVQPHSGSQANMAAIMSLIKPGDKILGMELSHGGHLTHGSKVSFSGMFFDAYSYGVSRDSEMIDYDDVKNIAKACRPNLIIAGASSYSREIDFKKFREIANEVSAYLLCDIAHTAGLVATGFHNSPIDVAHLTTSTTHKTLRGPRGGLILAGKEFNTMINYNNKERTLDSAVNSCVFPGTQGGPLMHVIAGKAVAFKEALNKEFKDYISRVIENTKAMAEYFISEGLRIVSGGTDNHLFLVDLSGLGITGADAEKILESVNITLNKNAIPFDSKNPSVASGIRIGAPAITSRGLNRDDSIKVAHFIIRALKTKSTDELRKIKQEVIGFISSFDMP.

Residues L112 and 116–118 contribute to the (6S)-5,6,7,8-tetrahydrofolate site; that span reads GHL. K221 carries the post-translational modification N6-(pyridoxal phosphate)lysine. E247 lines the (6S)-5,6,7,8-tetrahydrofolate pocket.

Belongs to the SHMT family. In terms of assembly, homodimer. The cofactor is pyridoxal 5'-phosphate.

It is found in the cytoplasm. The enzyme catalyses (6R)-5,10-methylene-5,6,7,8-tetrahydrofolate + glycine + H2O = (6S)-5,6,7,8-tetrahydrofolate + L-serine. It participates in one-carbon metabolism; tetrahydrofolate interconversion. Its pathway is amino-acid biosynthesis; glycine biosynthesis; glycine from L-serine: step 1/1. Functionally, catalyzes the reversible interconversion of serine and glycine with tetrahydrofolate (THF) serving as the one-carbon carrier. This reaction serves as the major source of one-carbon groups required for the biosynthesis of purines, thymidylate, methionine, and other important biomolecules. Also exhibits THF-independent aldolase activity toward beta-hydroxyamino acids, producing glycine and aldehydes, via a retro-aldol mechanism. This chain is Serine hydroxymethyltransferase, found in Borrelia duttonii (strain Ly).